Reading from the N-terminus, the 216-residue chain is Peptide methionine sulfoxide reductase MsrA (216 aa).

Residue C54 is part of the active site.

Belongs to the MsrA Met sulfoxide reductase family.

It catalyses the reaction L-methionyl-[protein] + [thioredoxin]-disulfide + H2O = L-methionyl-(S)-S-oxide-[protein] + [thioredoxin]-dithiol. The catalysed reaction is [thioredoxin]-disulfide + L-methionine + H2O = L-methionine (S)-S-oxide + [thioredoxin]-dithiol. Its function is as follows. Has an important function as a repair enzyme for proteins that have been inactivated by oxidation. Catalyzes the reversible oxidation-reduction of methionine sulfoxide in proteins to methionine. The chain is Peptide methionine sulfoxide reductase MsrA from Xanthomonas campestris pv. campestris (strain 8004).